The following is a 292-amino-acid chain: G1/S-specific cyclin-D3 (292 aa).

The Cyclin N-terminal domain occupies Val-27–Leu-152. The interval Ser-254 to Leu-292 is disordered. Ser-264 and Ser-279 each carry phosphoserine. A compositionally biased stretch (low complexity) spans Gly-272–Thr-285. Thr-283 is modified (phosphothreonine).

The protein belongs to the cyclin family. Cyclin D subfamily. Interacts with the CDK4 and CDK6 protein kinases to form a serine/threonine kinase holoenzyme complex. The cyclin subunit imparts substrate specificity to the complex. Interacts with ATF5. Interacts with EIF3K. Component of the ternary complex cyclin D/CDK4/CDKN1B required for nuclear translocation and modulation of CDK4-mediated kinase activity. Can form similar complexes with either CDKN1A or CDKN2A. In terms of processing, phosphorylation at Thr-283 by MAP kinases is required for ubiquitination and degradation by the DCX(AMBRA1) complex. Ubiquitinated by the DCX(AMBRA1) complex during the transition from G1 to S cell phase, leading to its degradation: ubiquitination is dependent on Thr-283 phosphorylation. The DCX(AMBRA1) complex represents the major regulator of CCND3 stability during the G1/S transition. Polyubiquitinated by the SCF(FBXL2) complex, leading to proteasomal degradation.

It localises to the nucleus. The protein localises to the cytoplasm. Regulatory component of the cyclin D3-CDK4 (DC) complex that phosphorylates and inhibits members of the retinoblastoma (RB) protein family including RB1 and regulates the cell-cycle during G(1)/S transition. Phosphorylation of RB1 allows dissociation of the transcription factor E2F from the RB/E2F complex and the subsequent transcription of E2F target genes which are responsible for the progression through the G(1) phase. Hypophosphorylates RB1 in early G(1) phase. Cyclin D-CDK4 complexes are major integrators of various mitogenenic and antimitogenic signals. Component of the ternary complex, cyclin D3/CDK4/CDKN1B, required for nuclear translocation and activity of the cyclin D-CDK4 complex. Shows transcriptional coactivator activity with ATF5 independently of CDK4. This is G1/S-specific cyclin-D3 from Homo sapiens (Human).